A 239-amino-acid chain; its full sequence is Pathogenesis-related protein 5 (239 aa).

An N-terminal signal peptide occupies residues 1–23 (MANISSIHILFLVFITSGIAVMA). 8 disulfides stabilise this stretch: Cys-32–Cys-238, Cys-79–Cys-89, Cys-94–Cys-99, Cys-146–Cys-228, Cys-151–Cys-211, Cys-159–Cys-174, Cys-178–Cys-187, and Cys-188–Cys-198.

This sequence belongs to the thaumatin family.

Its subcellular location is the secreted. It localises to the extracellular space. The protein localises to the apoplast. Functionally, partially responsible for acquired pathogen resistance. In Arabidopsis thaliana (Mouse-ear cress), this protein is Pathogenesis-related protein 5.